The sequence spans 668 residues: SHC SH2 domain-binding protein 1 (668 aa).

At A2 the chain carries N-acetylalanine. S31, S44, and S273 each carry phosphoserine. PbH1 repeat units lie at residues 428 to 451, 452 to 473, 474 to 496, 497 to 518, and 526 to 548; these read GMDV…LIIH, HGKT…TVRT, SAEL…EIYP, GSKC…LIKD, and IPKI…VLVK. S630 carries the post-translational modification Phosphoserine.

Interacts directly with isoform p52shc of SHC1 via its SH2 domain. Interacts with TRIM71; leading to enhanced SHCBP1 protein stability. Interacts with both members of the centralspindlin complex, KIF23 and RACGAP1. In terms of tissue distribution, expressed in spleen, lung and heart with higher expression in testis. No expression in brain, liver and skeletal muscle. Elevated expression in actively cycling cells.

The protein resides in the midbody. It is found in the cytoplasm. The protein localises to the cytoskeleton. It localises to the spindle. Its function is as follows. May play a role in signaling pathways governing cellular proliferation, cell growth and differentiation. May be a component of a novel signaling pathway downstream of Shc. Acts as a positive regulator of FGF signaling in neural progenitor cells. The sequence is that of SHC SH2 domain-binding protein 1 (Shcbp1) from Mus musculus (Mouse).